The chain runs to 63 residues: UPF0337 protein Atu0782 (63 aa).

The disordered stretch occupies residues 1-63 (MGSTSDKIAG…DAVKGAVDRM (63 aa)). Positions 51-63 (KAKDAVKGAVDRM) are enriched in basic and acidic residues.

Belongs to the UPF0337 (CsbD) family.

This chain is UPF0337 protein Atu0782, found in Agrobacterium fabrum (strain C58 / ATCC 33970) (Agrobacterium tumefaciens (strain C58)).